A 200-amino-acid polypeptide reads, in one-letter code: Cytochrome c biogenesis ATP-binding export protein CcmA (200 aa).

Positions 2–200 constitute an ABC transporter domain; it reads LDVIELDFDY…NKADYEEYHL (199 aa). 34–41 contributes to the ATP binding site; the sequence is GSNGAGKT.

This sequence belongs to the ABC transporter superfamily. CcmA exporter (TC 3.A.1.107) family. In terms of assembly, the complex is composed of two ATP-binding proteins (CcmA) and two transmembrane proteins (CcmB).

The protein localises to the cell inner membrane. The catalysed reaction is heme b(in) + ATP + H2O = heme b(out) + ADP + phosphate + H(+). Functionally, part of the ABC transporter complex CcmAB involved in the biogenesis of c-type cytochromes; once thought to export heme, this seems not to be the case, but its exact role is uncertain. Responsible for energy coupling to the transport system. This is Cytochrome c biogenesis ATP-binding export protein CcmA from Legionella pneumophila (strain Paris).